The following is a 214-amino-acid chain: Phosphoheptose isomerase (214 aa).

Residues Ile51 to Tyr209 form the SIS domain. Asn66–Gly68 provides a ligand contact to substrate. Positions 75 and 79 each coordinate Zn(2+). Substrate contacts are provided by residues Glu79, Asn110–Asp111, Ser136–Ser138, Ser141, and Gln189. 2 residues coordinate Zn(2+): Gln189 and His197.

It belongs to the SIS family. GmhA subfamily. Zn(2+) serves as cofactor.

It is found in the cytoplasm. The catalysed reaction is 2 D-sedoheptulose 7-phosphate = D-glycero-alpha-D-manno-heptose 7-phosphate + D-glycero-beta-D-manno-heptose 7-phosphate. It participates in carbohydrate biosynthesis; D-glycero-D-manno-heptose 7-phosphate biosynthesis; D-glycero-alpha-D-manno-heptose 7-phosphate and D-glycero-beta-D-manno-heptose 7-phosphate from sedoheptulose 7-phosphate: step 1/1. Its function is as follows. Catalyzes the isomerization of sedoheptulose 7-phosphate in D-glycero-D-manno-heptose 7-phosphate. The polypeptide is Phosphoheptose isomerase (Chlorobium limicola (strain DSM 245 / NBRC 103803 / 6330)).